The primary structure comprises 147 residues: Large ribosomal subunit protein uL15 (147 aa).

Over residues 1-15 (MTDRVKKTRKLRGHV) the composition is skewed to basic residues. Residues 1 to 34 (MTDRVKKTRKLRGHVSHGYGRVGKHRKHSGGRGL) form a disordered region.

Belongs to the universal ribosomal protein uL15 family.

The polypeptide is Large ribosomal subunit protein uL15 (RPL27A) (Encephalitozoon cuniculi (strain GB-M1) (Microsporidian parasite)).